The primary structure comprises 109 residues: Ribonuclease P protein component 4 (109 aa).

Zn(2+)-binding residues include Cys-65, Cys-68, Cys-94, and Cys-97.

This sequence belongs to the eukaryotic/archaeal RNase P protein component 4 family. As to quaternary structure, consists of a catalytic RNA component and at least 4-5 protein subunits. The cofactor is Zn(2+).

The protein resides in the cytoplasm. It catalyses the reaction Endonucleolytic cleavage of RNA, removing 5'-extranucleotides from tRNA precursor.. In terms of biological role, part of ribonuclease P, a protein complex that generates mature tRNA molecules by cleaving their 5'-ends. The chain is Ribonuclease P protein component 4 from Methanococcus vannielii (strain ATCC 35089 / DSM 1224 / JCM 13029 / OCM 148 / SB).